Consider the following 201-residue polypeptide: Dephospho-CoA kinase (201 aa).

The region spanning 4-201 (AFFVTASIAC…VIQEISKGKM (198 aa)) is the DPCK domain. Position 12-17 (12-17 (ACGKST)) interacts with ATP.

This sequence belongs to the CoaE family.

Its subcellular location is the cytoplasm. It carries out the reaction 3'-dephospho-CoA + ATP = ADP + CoA + H(+). The protein operates within cofactor biosynthesis; coenzyme A biosynthesis; CoA from (R)-pantothenate: step 5/5. In terms of biological role, catalyzes the phosphorylation of the 3'-hydroxyl group of dephosphocoenzyme A to form coenzyme A. The protein is Dephospho-CoA kinase of Campylobacter jejuni (strain RM1221).